The sequence spans 409 residues: Argininosuccinate synthase (409 aa).

Residues 8–16 (AYSGGLDTS) and A34 each bind ATP. Residue Y85 coordinates L-citrulline. G115 serves as a coordination point for ATP. Positions 117, 121, and 122 each coordinate L-aspartate. N121 provides a ligand contact to L-citrulline. L-citrulline-binding residues include R125, S178, S187, E268, and Y280.

The protein belongs to the argininosuccinate synthase family. Type 1 subfamily. In terms of assembly, homotetramer.

Its subcellular location is the cytoplasm. It carries out the reaction L-citrulline + L-aspartate + ATP = 2-(N(omega)-L-arginino)succinate + AMP + diphosphate + H(+). It participates in amino-acid biosynthesis; L-arginine biosynthesis; L-arginine from L-ornithine and carbamoyl phosphate: step 2/3. This Thermotoga sp. (strain RQ2) protein is Argininosuccinate synthase.